A 366-amino-acid polypeptide reads, in one-letter code: Isopentenyl-diphosphate delta-isomerase (366 aa).

Residue 6 to 7 (RK) coordinates substrate. FMN contacts are provided by residues threonine 63, 64 to 66 (GMT), serine 94, and asparagine 123. 94–96 (SQR) is a binding site for substrate. Glutamine 158 lines the substrate pocket. Residue glutamate 159 coordinates Mg(2+). FMN contacts are provided by residues lysine 191, serine 216, threonine 221, 273 to 275 (GIR), and 294 to 295 (AN).

The protein belongs to the IPP isomerase type 2 family. In terms of assembly, homooctamer. Dimer of tetramers. The cofactor is FMN. NADPH is required as a cofactor. Requires Mg(2+) as cofactor.

Its subcellular location is the cytoplasm. It catalyses the reaction isopentenyl diphosphate = dimethylallyl diphosphate. Involved in the biosynthesis of isoprenoids. Catalyzes the 1,3-allylic rearrangement of the homoallylic substrate isopentenyl (IPP) to its allylic isomer, dimethylallyl diphosphate (DMAPP). The protein is Isopentenyl-diphosphate delta-isomerase of Metallosphaera sedula (strain ATCC 51363 / DSM 5348 / JCM 9185 / NBRC 15509 / TH2).